A 49-amino-acid polypeptide reads, in one-letter code: Large ribosomal subunit protein bL33B (49 aa).

The protein belongs to the bacterial ribosomal protein bL33 family.

This chain is Large ribosomal subunit protein bL33B, found in Bacillus velezensis (strain DSM 23117 / BGSC 10A6 / LMG 26770 / FZB42) (Bacillus amyloliquefaciens subsp. plantarum).